Reading from the N-terminus, the 183-residue chain is TATA-box-binding protein (183 aa).

2 tandem repeats follow at residues 7 to 83 and 99 to 177.

This sequence belongs to the TBP family.

General factor that plays a role in the activation of archaeal genes transcribed by RNA polymerase. Binds specifically to the TATA box promoter element which lies close to the position of transcription initiation. This is TATA-box-binding protein from Methanothrix thermoacetophila (strain DSM 6194 / JCM 14653 / NBRC 101360 / PT) (Methanosaeta thermophila).